The primary structure comprises 473 residues: Photosystem II CP43 reaction center protein (473 aa).

Residues Met1 to Glu14 constitute a propeptide that is removed on maturation. Thr15 bears the N-acetylthreonine mark. Thr15 is subject to Phosphothreonine. 5 helical membrane-spanning segments follow: residues Leu69–Ala93, Leu134–Asn155, Lys178–Thr200, Lys255–Ser275, and Trp291–Ala312. Glu367 provides a ligand contact to [CaMn4O5] cluster. Residues Arg447–Pro471 form a helical membrane-spanning segment.

It belongs to the PsbB/PsbC family. PsbC subfamily. PSII is composed of 1 copy each of membrane proteins PsbA, PsbB, PsbC, PsbD, PsbE, PsbF, PsbH, PsbI, PsbJ, PsbK, PsbL, PsbM, PsbT, PsbX, PsbY, PsbZ, Psb30/Ycf12, at least 3 peripheral proteins of the oxygen-evolving complex and a large number of cofactors. It forms dimeric complexes. Binds multiple chlorophylls and provides some of the ligands for the Ca-4Mn-5O cluster of the oxygen-evolving complex. It may also provide a ligand for a Cl- that is required for oxygen evolution. PSII binds additional chlorophylls, carotenoids and specific lipids. is required as a cofactor.

It localises to the plastid. Its subcellular location is the chloroplast thylakoid membrane. Functionally, one of the components of the core complex of photosystem II (PSII). It binds chlorophyll and helps catalyze the primary light-induced photochemical processes of PSII. PSII is a light-driven water:plastoquinone oxidoreductase, using light energy to abstract electrons from H(2)O, generating O(2) and a proton gradient subsequently used for ATP formation. This chain is Photosystem II CP43 reaction center protein, found in Helianthus annuus (Common sunflower).